We begin with the raw amino-acid sequence, 399 residues long: Serine/threonine transporter SstT (399 aa).

9 helical membrane passes run 8-28 (LSLVTKIFIAIILGFVVAFLF), 37-57 (IFGEIFIKALKAVAPILVFVL), 77-97 (ILFLYIVSMLFAAFSAVIADL), 134-154 (PVVALSEANFIGILAWAIILG), 178-198 (VIHLVISFAPIGIFGLVAVTF), 212-232 (LLLVLLGTMFFMALIVNPIMV), 284-304 (VIIPLGSTVNMCGAAITITVL), 312-332 (LGISVDIWTMLILCVVASISA), and 348-370 (VACSLFGISSDIAMQVVAIGMVI).

It belongs to the dicarboxylate/amino acid:cation symporter (DAACS) (TC 2.A.23) family.

The protein resides in the cell inner membrane. It catalyses the reaction L-serine(in) + Na(+)(in) = L-serine(out) + Na(+)(out). The catalysed reaction is L-threonine(in) + Na(+)(in) = L-threonine(out) + Na(+)(out). Its function is as follows. Involved in the import of serine and threonine into the cell, with the concomitant import of sodium (symport system). This chain is Serine/threonine transporter SstT, found in Acinetobacter baylyi (strain ATCC 33305 / BD413 / ADP1).